The following is a 244-amino-acid chain: 5-oxoprolinase subunit A (244 aa).

Belongs to the LamB/PxpA family. In terms of assembly, forms a complex composed of PxpA, PxpB and PxpC.

The catalysed reaction is 5-oxo-L-proline + ATP + 2 H2O = L-glutamate + ADP + phosphate + H(+). Catalyzes the cleavage of 5-oxoproline to form L-glutamate coupled to the hydrolysis of ATP to ADP and inorganic phosphate. This Shigella sonnei (strain Ss046) protein is 5-oxoprolinase subunit A.